The sequence spans 284 residues: Proteasome subunit pbs-5 (284 aa).

A propeptide spans 1 to 64 (MWGETFDDFE…AGKSMQFRKG (64 aa)) (removed in mature form). Threonine 65 functions as the Nucleophile in the catalytic mechanism.

The protein belongs to the peptidase T1B family. As to quaternary structure, the 26S proteasome consists of a 20S proteasome core and two 19S regulatory subunits. The 20S proteasome core is composed of 28 subunits that are arranged in four stacked rings, resulting in a barrel-shaped structure. The two end rings are each formed by seven alpha subunits, and the two central rings are each formed by seven beta subunits. The catalytic chamber with the active sites is on the inside of the barrel.

The protein resides in the cytoplasm. It localises to the nucleus. The catalysed reaction is Cleavage of peptide bonds with very broad specificity.. Its function is as follows. Component of the 20S core proteasome complex involved in the proteolytic degradation of most intracellular proteins. This complex plays numerous essential roles within the cell by associating with different regulatory particles. Associated with two 19S regulatory particles, forms the 26S proteasome and thus participates in the ATP-dependent degradation of ubiquitinated proteins. The 26S proteasome plays a key role in the maintenance of protein homeostasis by removing misfolded or damaged proteins that could impair cellular functions, and by removing proteins whose functions are no longer required. The sequence is that of Proteasome subunit pbs-5 from Caenorhabditis elegans.